The following is a 414-amino-acid chain: Enolase (414 aa).

Gln162 is a (2R)-2-phosphoglycerate binding site. The Proton donor role is filled by Glu204. Residues Asp239, Glu280, and Asp307 each coordinate Mg(2+). Residues Lys332, Arg361, Ser362, and Lys383 each coordinate (2R)-2-phosphoglycerate. The Proton acceptor role is filled by Lys332.

It belongs to the enolase family. The cofactor is Mg(2+).

It is found in the cytoplasm. Its subcellular location is the secreted. The protein localises to the cell surface. The enzyme catalyses (2R)-2-phosphoglycerate = phosphoenolpyruvate + H2O. It functions in the pathway carbohydrate degradation; glycolysis; pyruvate from D-glyceraldehyde 3-phosphate: step 4/5. Its function is as follows. Catalyzes the reversible conversion of 2-phosphoglycerate (2-PG) into phosphoenolpyruvate (PEP). It is essential for the degradation of carbohydrates via glycolysis. The protein is Enolase of Campylobacter jejuni subsp. doylei (strain ATCC BAA-1458 / RM4099 / 269.97).